A 78-amino-acid polypeptide reads, in one-letter code: Large ribosomal subunit protein bL28 (78 aa).

Positions 1-25 (MSRVCQVTGKRPAVGNNRSHAKNAT) are disordered.

It belongs to the bacterial ribosomal protein bL28 family.

The polypeptide is Large ribosomal subunit protein bL28 (Aliivibrio salmonicida (strain LFI1238) (Vibrio salmonicida (strain LFI1238))).